Reading from the N-terminus, the 278-residue chain is HTH-type transcriptional regulator TsaQ1/TsaQ2 (278 aa).

The HTH iclR-type domain occupies valine 19–alanine 80. A DNA-binding region (H-T-H motif) is located at residues asparagine 40–serine 59. Positions leucine 95 to alanine 266 constitute an IclR-ED domain.

Both copies function as additional regulators for the tsa locus, specifically for tsaT. The polypeptide is HTH-type transcriptional regulator TsaQ1/TsaQ2 (tsaQ1) (Comamonas testosteroni (Pseudomonas testosteroni)).